The following is a 131-amino-acid chain: Profilin-3 (131 aa).

A disulfide bridge connects residues C13 and C115. Positions 81 to 97 (AVIRGKKGSGGITIKKT) match the Involved in PIP2 interaction motif. T111 carries the phosphothreonine modification.

It belongs to the profilin family. In terms of assembly, occurs in many kinds of cells as a complex with monomeric actin in a 1:1 ratio. In terms of processing, phosphorylated by MAP kinases.

Its subcellular location is the cytoplasm. The protein resides in the cytoskeleton. In terms of biological role, binds to actin and affects the structure of the cytoskeleton. At high concentrations, profilin prevents the polymerization of actin, whereas it enhances it at low concentrations. The protein is Profilin-3 of Olea europaea (Common olive).